The primary structure comprises 1502 residues: Nucleoporin NUP170 (1502 aa).

A disordered region spans residues 1–31 (MFQSFFHNNGPAAAGETFSDSRSYPLTNHQE). The segment covering 18–30 (FSDSRSYPLTNHQ) has biased composition (polar residues). The interval 233–261 (LISTTMELFMFAISLDKATNELSVFNTHL) is leucine-zipper. Ser-1247 bears the Phosphoserine mark.

It belongs to the non-repetitive/WGA-negative nucleoporin family. As to quaternary structure, component of the nuclear pore complex (NPC). NPC constitutes the exclusive means of nucleocytoplasmic transport. NPCs allow the passive diffusion of ions and small molecules and the active, nuclear transport receptor-mediated bidirectional transport of macromolecules such as proteins, RNAs, ribonucleoparticles (RNPs), and ribosomal subunits across the nuclear envelope. Due to its 8-fold rotational symmetry, all subunits are present with 8 copies or multiples thereof. During mitosis NUP53 changes its binding partner within the NPC from NUP170 to NIC96, exposing a high affinity binding site for the karyopherin PSE1, and retaining it in the NPC.

Its subcellular location is the nucleus. The protein resides in the nuclear pore complex. The protein localises to the nucleus membrane. Its function is as follows. Functions as a component of the nuclear pore complex (NPC). NPC components, collectively referred to as nucleoporins (NUPs), can play the role of both NPC structural components and of docking or interaction partners for transiently associated nuclear transport factors. NUP170 probably plays an important role in NPC assembly and organization. In addition it is required for chromosome transmission fidelity. This Saccharomyces cerevisiae (strain ATCC 204508 / S288c) (Baker's yeast) protein is Nucleoporin NUP170 (NUP170).